Consider the following 208-residue polypeptide: NAD(P)H-quinone oxidoreductase subunit I (208 aa).

4Fe-4S ferredoxin-type domains are found at residues 55–84 (GRIH…VDWV) and 95–124 (RNYS…MTEE). 8 residues coordinate [4Fe-4S] cluster: Cys-64, Cys-67, Cys-70, Cys-74, Cys-104, Cys-107, Cys-110, and Cys-114.

Belongs to the complex I 23 kDa subunit family. NDH-1 is composed of at least 11 different subunits. It depends on [4Fe-4S] cluster as a cofactor.

It localises to the cellular thylakoid membrane. The catalysed reaction is a plastoquinone + NADH + (n+1) H(+)(in) = a plastoquinol + NAD(+) + n H(+)(out). It catalyses the reaction a plastoquinone + NADPH + (n+1) H(+)(in) = a plastoquinol + NADP(+) + n H(+)(out). NDH-1 shuttles electrons from an unknown electron donor, via FMN and iron-sulfur (Fe-S) centers, to quinones in the respiratory and/or the photosynthetic chain. The immediate electron acceptor for the enzyme in this species is believed to be plastoquinone. Couples the redox reaction to proton translocation, and thus conserves the redox energy in a proton gradient. The chain is NAD(P)H-quinone oxidoreductase subunit I from Prochlorococcus marinus (strain MIT 9515).